Consider the following 890-residue polypeptide: Translation initiation factor IF-2 (890 aa).

Positions 45-303 are disordered; the sequence is LIDHLNQKNS…SLQQGFQKPA (259 aa). The span at 67 to 81 shows a compositional bias: polar residues; sequence STLNIPGTGGKSKSV. Over residues 92–217 the composition is skewed to basic and acidic residues; that stretch reads VKRDPQEAER…RMAEENKWTD (126 aa). Over residues 252 to 266 the composition is skewed to basic residues; it reads GRGRNAKAARPKKGN. The segment covering 267 to 280 has biased composition (basic and acidic residues); that stretch reads KHAESKADREEARA. In terms of domain architecture, tr-type G spans 389–558; that stretch reads PRAPVVTIMG…LLQAEVLELK (170 aa). The G1 stretch occupies residues 398–405; that stretch reads GHVDHGKT. 398–405 contributes to the GTP binding site; that stretch reads GHVDHGKT. Residues 423–427 form a G2 region; sequence GITQH. Positions 444 to 447 are G3; it reads DTPG. GTP-binding positions include 444 to 448 and 498 to 501; these read DTPGH and NKID. The interval 498 to 501 is G4; it reads NKID. The G5 stretch occupies residues 534-536; sequence SAK. Lys808 bears the N6-acetyllysine mark.

Belongs to the TRAFAC class translation factor GTPase superfamily. Classic translation factor GTPase family. IF-2 subfamily.

The protein localises to the cytoplasm. Functionally, one of the essential components for the initiation of protein synthesis. Protects formylmethionyl-tRNA from spontaneous hydrolysis and promotes its binding to the 30S ribosomal subunits. Also involved in the hydrolysis of GTP during the formation of the 70S ribosomal complex. The protein is Translation initiation factor IF-2 of Shigella boydii serotype 18 (strain CDC 3083-94 / BS512).